The chain runs to 232 residues: Large ribosomal subunit protein uL1 (232 aa).

It belongs to the universal ribosomal protein uL1 family. Part of the 50S ribosomal subunit.

Its function is as follows. Binds directly to 23S rRNA. The L1 stalk is quite mobile in the ribosome, and is involved in E site tRNA release. In terms of biological role, protein L1 is also a translational repressor protein, it controls the translation of the L11 operon by binding to its mRNA. The polypeptide is Large ribosomal subunit protein uL1 (Paraburkholderia xenovorans (strain LB400)).